A 674-amino-acid chain; its full sequence is YAP1-binding protein 1 (674 aa).

The protein belongs to the YBP1 family. Interacts with YAP1. Forms a peroxide stress induced complex with YAP1 in the cytoplasm. Systematic proteome-wide 2-hybrid interaction studies suggest that YAP1, HYR1/GPX3, and YBP1 all interact with the nuclear pore complex subunit NUP116, which is involved in nucleocytoplasmic transport.

The protein localises to the cytoplasm. Involved in oxidative stress response and redox homeostasis. Required for hydrogen peroxide-induced oxidation and nuclear localization (activation) of YAP1. Functions probably in concert with HYP1/GPX3, the actual YAP1 modifying enzyme. YBP1 is not required for HYP1/GPX3-independent, diamide-induced oxidation of YAP1. The sequence is that of YAP1-binding protein 1 from Saccharomyces cerevisiae (strain ATCC 204508 / S288c) (Baker's yeast).